Here is a 197-residue protein sequence, read N- to C-terminus: Potassium-transporting ATPase KdpC subunit (197 aa).

Residues 7–27 form a helical membrane-spanning segment; that stretch reads PAFISLILFTLLFGLIYPLTV.

Belongs to the KdpC family. As to quaternary structure, the system is composed of three essential subunits: KdpA, KdpB and KdpC.

It is found in the cell inner membrane. Part of the high-affinity ATP-driven potassium transport (or Kdp) system, which catalyzes the hydrolysis of ATP coupled with the electrogenic transport of potassium into the cytoplasm. This subunit acts as a catalytic chaperone that increases the ATP-binding affinity of the ATP-hydrolyzing subunit KdpB by the formation of a transient KdpB/KdpC/ATP ternary complex. In Beijerinckia indica subsp. indica (strain ATCC 9039 / DSM 1715 / NCIMB 8712), this protein is Potassium-transporting ATPase KdpC subunit.